The primary structure comprises 221 residues: Lipoprotein-releasing system ATP-binding protein LolD (221 aa).

The 215-residue stretch at leucine 6–isoleucine 220 folds into the ABC transporter domain. Glycine 42 to serine 49 is a binding site for ATP.

It belongs to the ABC transporter superfamily. Lipoprotein translocase (TC 3.A.1.125) family. The complex is composed of two ATP-binding proteins (LolD) and two transmembrane proteins (LolC and LolE).

It localises to the cell inner membrane. Its function is as follows. Part of the ABC transporter complex LolCDE involved in the translocation of mature outer membrane-directed lipoproteins, from the inner membrane to the periplasmic chaperone, LolA. Responsible for the formation of the LolA-lipoprotein complex in an ATP-dependent manner. This Rickettsia felis (strain ATCC VR-1525 / URRWXCal2) (Rickettsia azadi) protein is Lipoprotein-releasing system ATP-binding protein LolD.